The chain runs to 469 residues: ABHD16B (469 aa).

One can recognise an AB hydrolase-1 domain in the interval 174–298 (VICCEGNAGF…GLVVRTVREH (125 aa)). Active-site charge relay system residues include S247, D322, and H418.

It belongs to the AB hydrolase superfamily. ABHD16 family.

It catalyses the reaction a 1,2-diacyl-sn-glycero-3-phospho-L-serine + H2O = a 2-acyl-sn-glycero-3-phospho-L-serine + a fatty acid + H(+). It carries out the reaction a 1-acylglycerol + H2O = glycerol + a fatty acid + H(+). The catalysed reaction is 1-(9Z-octadecenoyl)-glycerol + H2O = glycerol + (9Z)-octadecenoate + H(+). Its function is as follows. Hydrolyzes the sn-1 position of glycerophospholipids with high specificity towards phosphatidylserine (PS), PS-PLA1 enzyme. Also hydrolyzes the acyl chain of glycerolipids with a preference for the monoacylglycerol (MAG) 1-acylglycerol, MAG lipase. Plays a regulatory role in cellular lipid homeostasis by modulating genes involved in neutral lipid degradation and in phospholipid synthesis and composition. The sequence is that of ABHD16B from Homo sapiens (Human).